The primary structure comprises 162 residues: UPF0114 protein PSEEN0819 (162 aa).

Helical transmembrane passes span 15–35 (LLAP…LKFF), 53–73 (LVLV…LVMV), and 136–156 (LMWY…MGYL).

Belongs to the UPF0114 family.

The protein resides in the cell membrane. The chain is UPF0114 protein PSEEN0819 from Pseudomonas entomophila (strain L48).